A 103-amino-acid chain; its full sequence is Protamine-2 (103 aa).

Residues 1-103 form a disordered region; it reads MVRYRMRSLS…RTRRRRCRRY (103 aa). Residues S8 and S10 each carry the phosphoserine modification. Over residues 8-17 the composition is skewed to basic and acidic residues; the sequence is SLSERPHEVH. Residues 23–35 show a composition bias toward low complexity; that stretch reads GQEQGHNGQEEQG. S37 carries the phosphoserine modification. Basic and acidic residues predominate over residues 39–48; the sequence is EHVEVYERTH. Positions 51–103 are enriched in basic residues; the sequence is YSHHRRRRCSRRRLYRIHRRRHRSCRRRRRRSCRHRRRHRRGCRTRRRRCRRY.

The protein belongs to the protamine P2 family. As to quaternary structure, interacts with TDRP. In terms of processing, proteolytic processing into mature chains is required for histone eviction during spermatogenesis. Transition proteins (TNP1 and TNP2) are required for processing. Testis.

Its subcellular location is the nucleus. It is found in the chromosome. Functionally, protamines substitute for histones in the chromatin of sperm during the haploid phase of spermatogenesis. They compact sperm DNA into a highly condensed, stable and inactive complex. The chain is Protamine-2 (PRM2) from Semnopithecus entellus (Northern plains gray langur).